The primary structure comprises 470 residues: UDP-glycosyltransferase 75C1 (470 aa).

His-16 functions as the Proton acceptor in the catalytic mechanism. Residue His-16 participates in an anthocyanidin binding. Gln-347, His-362, Trp-365, Asn-366, Ser-367, Glu-370, Asp-386, and Gln-387 together coordinate UDP-alpha-D-glucose.

It belongs to the UDP-glycosyltransferase family. Expressed in flowers and fruits, especially in pulp, and, at lower levels, in seeds.

The protein localises to the cytoplasm. It is found in the nucleus. It carries out the reaction 2-cis-(+)-abscisate + UDP-alpha-D-glucose = beta-D-glucopyranosyl cis-(+)-abscisate + UDP. It catalyses the reaction (indol-3-yl)acetate + UDP-alpha-D-glucose = 1-O-(indol-3-ylacetyl)-beta-D-glucose + UDP. Functionally, glucosyltransferase acting on both abscisic acid (ABA) and auxin (IAA). Required for ABA-mediated fruit ripening, seed germination, and negative responses to drought. This is UDP-glycosyltransferase 75C1 from Solanum lycopersicum (Tomato).